Consider the following 183-residue polypeptide: Proton-transporting V-type ATPase complex assembly regulator TMEM9 (183 aa).

Positions 1–20 are cleaved as a signal peptide; the sequence is MKLLCLVAVVGCLLVPPAQA. 3 N-linked (GlcNAc...) asparagine glycosylation sites follow: Asn21, Asn38, and Asn47. At 21–89 the chain is on the extracellular side; the sequence is NKSSEDIRCK…YEERSTTTIK (69 aa). Residues 90–110 form a helical membrane-spanning segment; the sequence is VIIVIYLSVVGALLLYMAFLM. At 111–183 the chain is on the cytoplasmic side; that stretch reads LVDPLIRKPD…TVFDRHKMLS (73 aa). The residue at position 144 (Ser144) is a Phosphoserine.

Belongs to the TMEM9 family. As to quaternary structure, interacts with the v-ATPase accessory protein ATP6AP2 and with the v-ATPase complex subunit ATP6V0D1; these interactions lead to the assembly of the v-ATPase complex. N-glycosylated. Expressed in heart, lung, kidney, liver and intestines. Enriched in the hepatocytes around the central vein.

It is found in the lysosome membrane. The protein resides in the late endosome membrane. It localises to the endosome. Its subcellular location is the multivesicular body membrane. Transmembrane protein that binds to and facilitates the assembly of lysosomal proton-transporting V-type ATPase (v-ATPase), resulting in enhanced lysosomal acidification and trafficking. By bringing the v-ATPase accessory protein ATP6AP2 and the v-ATPase subunit ATP6V0D1 together, allows v-ATPase complex formation and activation. TMEM9-controlled vesicular acidification induces hyperactivation of Wnt/beta-catenin signaling, involved in development, tissue homeostasis and tissue regeneration, through lysosomal degradation of adenomatous polyposis coli/APC. In the liver, involved in hepatic regeneration. The protein is Proton-transporting V-type ATPase complex assembly regulator TMEM9 of Mus musculus (Mouse).